The sequence spans 228 residues: Phosphoglycolate phosphatase (228 aa).

Catalysis depends on D9, which acts as the Nucleophile. Residues D9 and D11 each coordinate Mg(2+). Residue K151 participates in substrate binding. Mg(2+) is bound by residues D174 and D178.

Belongs to the archaeal SPP-like hydrolase family. Requires Mg(2+) as cofactor.

The catalysed reaction is 2-phosphoglycolate + H2O = glycolate + phosphate. Its function is as follows. Catalyzes the dephosphorylation of 2-phosphoglycolate. This is Phosphoglycolate phosphatase from Pyrobaculum aerophilum (strain ATCC 51768 / DSM 7523 / JCM 9630 / CIP 104966 / NBRC 100827 / IM2).